The chain runs to 417 residues: Argininosuccinate synthase (417 aa).

9-17 is an ATP binding site; sequence AYSGGLDTS. Tyr-87 serves as a coordination point for L-citrulline. Residue Gly-117 participates in ATP binding. Residues Thr-119, Asn-123, and Asp-124 each contribute to the L-aspartate site. L-citrulline is bound at residue Asn-123. Residues Arg-127, Ser-175, Ser-184, Glu-260, and Tyr-272 each contribute to the L-citrulline site.

It belongs to the argininosuccinate synthase family. Type 1 subfamily. As to quaternary structure, homotetramer.

The protein localises to the cytoplasm. The enzyme catalyses L-citrulline + L-aspartate + ATP = 2-(N(omega)-L-arginino)succinate + AMP + diphosphate + H(+). Its pathway is amino-acid biosynthesis; L-arginine biosynthesis; L-arginine from L-ornithine and carbamoyl phosphate: step 2/3. This chain is Argininosuccinate synthase, found in Oceanobacillus iheyensis (strain DSM 14371 / CIP 107618 / JCM 11309 / KCTC 3954 / HTE831).